The sequence spans 278 residues: Shikimate dehydrogenase (NADP(+)) (278 aa).

Residues 19 to 21 (SRS) and threonine 66 contribute to the shikimate site. The active-site Proton acceptor is the lysine 70. The shikimate site is built by asparagine 91 and aspartate 106. NADP(+) is bound by residues 129 to 133 (GAGGA) and phenylalanine 221. Tyrosine 223 lines the shikimate pocket. Glycine 242 contributes to the NADP(+) binding site.

It belongs to the shikimate dehydrogenase family. As to quaternary structure, homodimer.

The catalysed reaction is shikimate + NADP(+) = 3-dehydroshikimate + NADPH + H(+). Its pathway is metabolic intermediate biosynthesis; chorismate biosynthesis; chorismate from D-erythrose 4-phosphate and phosphoenolpyruvate: step 4/7. Functionally, involved in the biosynthesis of the chorismate, which leads to the biosynthesis of aromatic amino acids. Catalyzes the reversible NADPH linked reduction of 3-dehydroshikimate (DHSA) to yield shikimate (SA). The polypeptide is Shikimate dehydrogenase (NADP(+)) (Anaeromyxobacter sp. (strain K)).